The primary structure comprises 283 residues: Probable endonuclease 4 (283 aa).

9 residues coordinate Zn(2+): His69, His113, Glu148, Asp182, His185, His217, Asp230, His232, and Glu262.

This sequence belongs to the AP endonuclease 2 family. Requires Zn(2+) as cofactor.

The enzyme catalyses Endonucleolytic cleavage to 5'-phosphooligonucleotide end-products.. Endonuclease IV plays a role in DNA repair. It cleaves phosphodiester bonds at apurinic or apyrimidinic (AP) sites, generating a 3'-hydroxyl group and a 5'-terminal sugar phosphate. This is Probable endonuclease 4 from Bifidobacterium longum (strain DJO10A).